A 1173-amino-acid chain; its full sequence is Paired amphipathic helix protein Sin3-like 6 (1173 aa).

Residues asparagine 40–glutamate 75 are disordered. Residues alanine 55–glutamate 75 show a composition bias toward basic and acidic residues. PAH domains are found at residues leucine 79–glycine 148 and isoleucine 162–cysteine 232. Disordered stretches follow at residues alanine 236 to tyrosine 337, threonine 655 to proline 697, and lysine 740 to lysine 813. Basic and acidic residues-rich tracts occupy residues cysteine 264–arginine 276 and arginine 301–lysine 319. Residues serine 320–tyrosine 337 are compositionally biased toward polar residues. Residues proline 750 to asparagine 765 are compositionally biased toward polar residues. Positions arginine 778 to glutamate 810 are enriched in basic and acidic residues.

It is found in the nucleus. Its function is as follows. Acts as a transcriptional repressor. Plays roles in regulating gene expression and genome stability. In Arabidopsis thaliana (Mouse-ear cress), this protein is Paired amphipathic helix protein Sin3-like 6 (SNL6).